The chain runs to 391 residues: AN1-type zinc finger and UBX domain-containing protein DDB_G0268260 (391 aa).

The span at 1 to 16 shows a compositional bias: low complexity; sequence MQQQSPPTAPQQQQQQ. Positions 1–20 are disordered; it reads MQQQSPPTAPQQQQQQQRER. 2 AN1-type zinc fingers span residues 26 to 74 and 118 to 166; these read DHIG…QREN and APKS…IINS. Cys32, Cys37, Cys47, Cys50, Cys55, His58, His64, Cys66, Cys124, Cys129, Cys139, Cys142, Cys147, His150, His156, and Cys158 together coordinate Zn(2+). Residues 185 to 236 are compositionally biased toward low complexity; the sequence is NINNNINNNKNNNNNNNNNNNNNNNNNNNNNNNNNNNNNNNNNNNNNSNNNN. The tract at residues 185-240 is disordered; the sequence is NINNNINNNKNNNNNNNNNNNNNNNNNNNNNNNNNNNNNNNNNNNNNSNNNNKLIY. The UBX domain occupies 278–356; that stretch reads SSEEIGEIGI…GLLPVSTLYM (79 aa).

This Dictyostelium discoideum (Social amoeba) protein is AN1-type zinc finger and UBX domain-containing protein DDB_G0268260.